The sequence spans 243 residues: Ribonuclease PH (243 aa).

Residues R91 and 129-131 (GTR) each bind phosphate.

Belongs to the RNase PH family. As to quaternary structure, homohexameric ring arranged as a trimer of dimers.

The catalysed reaction is tRNA(n+1) + phosphate = tRNA(n) + a ribonucleoside 5'-diphosphate. Phosphorolytic 3'-5' exoribonuclease that plays an important role in tRNA 3'-end maturation. Removes nucleotide residues following the 3'-CCA terminus of tRNAs; can also add nucleotides to the ends of RNA molecules by using nucleoside diphosphates as substrates, but this may not be physiologically important. Probably plays a role in initiation of 16S rRNA degradation (leading to ribosome degradation) during starvation. The protein is Ribonuclease PH of Burkholderia thailandensis (strain ATCC 700388 / DSM 13276 / CCUG 48851 / CIP 106301 / E264).